We begin with the raw amino-acid sequence, 520 residues long: Sodium-dependent dicarboxylate transporter SdcS (520 aa).

14 consecutive transmembrane segments (helical) span residues 30–50 (AGQL…LLFF), 55–75 (LPWE…WWIT), 77–97 (AIPI…GHIL), 104–124 (SEYG…AIAM), 160–180 (SMFV…LAII), 207–227 (IGYA…PLII), 242–262 (FAKW…ITWL), 298–318 (KVVQ…EFLL), 323–343 (VTSS…LFVI), 362–382 (ELPW…KGIS), 399–419 (GVSP…LTEV), 428–448 (MILP…LLLM), 452–472 (AMAA…AIIF), and 491–511 (LISA…VLGI).

This sequence belongs to the SLC13A/DASS transporter (TC 2.A.47) family. NADC subfamily.

It is found in the cell membrane. Its function is as follows. Mediates the transport of the dicarboxylates fumarate, malate, and succinate across the cytoplasmic membrane via a Na(+)-electrochemical gradient. In Staphylococcus aureus (strain bovine RF122 / ET3-1), this protein is Sodium-dependent dicarboxylate transporter SdcS (sdcS).